Here is a 626-residue protein sequence, read N- to C-terminus: Solute carrier family 13 member 4 (626 aa).

Helical transmembrane passes span 13-33, 52-72, 77-97, and 113-133; these read LLLVVCVPLLLLPLPVLHPSS, AVPLGAAALVPAFLYPFFGVL, VAAEYFKNTTLLLVGVICVAA, and VLMAGAKPGMLLLCFMCCTTL. The span at 217-228 shows a compositional bias: polar residues; it reads SITNPIKTANQH. The segment at 217–252 is disordered; the sequence is SITNPIKTANQHQGKKQHPSQEKPQVLTPSPRKQKL. Helical transmembrane passes span 274 to 294, 309 to 329, 372 to 392, 414 to 434, 466 to 486, 499 to 519, 543 to 563, and 590 to 610; these read YSATIGGLTTIIGTSTSLIFL, FGTWFLFSFPISLIMLVVSWF, ISYPEMVTGFFFILMTVLWFT, ATVSVFLGFLLFLIPAKKPCF, IVILVGGGYALASGSKSSGLS, LPPWAVTLLACILVSIVTEFV, PLYTLIPVTMCISFAVMLPVG, and VIGLVIVMVAINTWGVSLFHL.

The protein belongs to the SLC13A/DASS transporter (TC 2.A.47) family. NADC subfamily. As to expression, highly expressed in placenta and testis with intermediate levels in brain and lower levels in heart, thymus and liver.

It localises to the membrane. It catalyses the reaction sulfate(out) + 3 Na(+)(out) = sulfate(in) + 3 Na(+)(in). Transport is inhibited by thiosulfate, phosphate, molybdate, selenate and tungstate. Not inhibited by oxalate, citrate, succinate, phenol red or 4,4'-diisothiocyanostilbene-2,2'-disulfonic acid (DIDS). In terms of biological role, sodium:sulfate symporter that mediates sulfate reabsorption in the high endothelial venules (HEV). This chain is Solute carrier family 13 member 4 (SLC13A4), found in Homo sapiens (Human).